A 485-amino-acid chain; its full sequence is NADH-quinone oxidoreductase subunit N (485 aa).

The next 14 helical transmembrane spans lie at 8–28 (LIALLPLLIVGLTVVVVMLSI), 35–55 (FLNATLSVIGLNAALVSLWFV), 71–91 (GFAMLYTGLVLLASLATCTFA), 105–125 (FYLLVLIASLGGILLANANHL), 127–147 (ALFLGIELISLPLFGLIGYAF), 159–179 (YTILSAAASSFLLFGMALVYA), 203–223 (LLAGFGLMIVGLGFKLSLAPF), 235–255 (PAPVSTFLATASKIAIFGVVM), 271–291 (VVLGIIAFASIIFGNLMALSQ), 297–317 (LLGYSSISHLGYLLVALIALQ), 326–346 (VGVYLAGYLFSSLGAFGVVSL), 373–393 (AAVMTVMMLSLAGIPMTLGFI), 408–430 (WWLVAAVVVGSAIGLYYYLRVAV), and 455–475 (IVVLISALLVLVLGVWPQPLI).

Belongs to the complex I subunit 2 family. As to quaternary structure, NDH-1 is composed of 13 different subunits. Subunits NuoA, H, J, K, L, M, N constitute the membrane sector of the complex.

Its subcellular location is the cell inner membrane. It carries out the reaction a quinone + NADH + 5 H(+)(in) = a quinol + NAD(+) + 4 H(+)(out). In terms of biological role, NDH-1 shuttles electrons from NADH, via FMN and iron-sulfur (Fe-S) centers, to quinones in the respiratory chain. The immediate electron acceptor for the enzyme in this species is believed to be ubiquinone. Couples the redox reaction to proton translocation (for every two electrons transferred, four hydrogen ions are translocated across the cytoplasmic membrane), and thus conserves the redox energy in a proton gradient. The chain is NADH-quinone oxidoreductase subunit N from Salmonella paratyphi C (strain RKS4594).